The following is a 200-amino-acid chain: 3-isopropylmalate dehydratase small subunit (200 aa).

This sequence belongs to the LeuD family. LeuD type 1 subfamily. In terms of assembly, heterodimer of LeuC and LeuD.

The catalysed reaction is (2R,3S)-3-isopropylmalate = (2S)-2-isopropylmalate. The protein operates within amino-acid biosynthesis; L-leucine biosynthesis; L-leucine from 3-methyl-2-oxobutanoate: step 2/4. Its function is as follows. Catalyzes the isomerization between 2-isopropylmalate and 3-isopropylmalate, via the formation of 2-isopropylmaleate. In Proteus mirabilis (strain HI4320), this protein is 3-isopropylmalate dehydratase small subunit.